Consider the following 104-residue polypeptide: MSAIQGIEGVISQLQTTAMSARAQESLPQPTISFAGQLHAALDRISDTQTAARTQAEKFTLGEPGVALNDVMTDMQKASVSMQMGIQVRNKLVAAYQEVMSMQV.

It belongs to the FliE family.

Its subcellular location is the bacterial flagellum basal body. In Escherichia coli (strain 55989 / EAEC), this protein is Flagellar hook-basal body complex protein FliE.